Here is a 278-residue protein sequence, read N- to C-terminus: OX-2 membrane glycoprotein (278 aa).

The N-terminal stretch at 1 to 30 (MERLVIRMPFSHLSTYSLVWVMAAVVLCTA) is a signal peptide. The Ig-like V-type domain occupies 31 to 141 (QVQVVTQDER…SGTACLTVYV (111 aa)). At 31 to 232 (QVQVVTQDER…TDFKQTVNKG (202 aa)) the chain is on the extracellular side. Intrachain disulfides connect Cys51–Cys121 and Cys118–Cys136. 3 N-linked (GlcNAc...) asparagine glycosylation sites follow: Asn95, Asn103, and Asn110. The Ig-like C2-type domain maps to 142–232 (QPIVSLHYKF…TDFKQTVNKG (91 aa)). Residues Asn157, Asn181, and Asn190 are each glycosylated (N-linked (GlcNAc...) asparagine). A disulfide bond links Cys160 and Cys214. A helical membrane pass occupies residues 233-259 (YWFSVPLLLSIVSLVILLVLISILLYW). At 260–278 (KRHRNQDRGELSQGVQKMT) the chain is on the cytoplasmic side.

In terms of assembly, CD200 and CD200R1 interact via their respective N-terminal Ig-like domains.

It is found in the cell membrane. Functionally, costimulates T-cell proliferation. May regulate myeloid cell activity in a variety of tissues. The sequence is that of OX-2 membrane glycoprotein (CD200) from Homo sapiens (Human).